A 396-amino-acid polypeptide reads, in one-letter code: Calreticulin (396 aa).

An N-terminal signal peptide occupies residues 1–15 (MKSLCLLAIVAVVSA). A disulfide bond links Cys-101 and Cys-133. The an alpha-D-glucoside site is built by Tyr-105, Lys-107, Tyr-124, and Asp-131. 7 repeat units span residues 186-197 (AQTGSLEEDWDL), 205-216 (DPDAKKPEDWDE), 222-233 (DAEDVKPEDWEK), 239-250 (DPDAKKPEDWDD), 254-264 (GEWEPPMIDNP), 268-278 (GEWKPKQIKNP), and 282-292 (GKWIHPEIENP). Residues 186–250 (AQTGSLEEDW…DAKKPEDWDD (65 aa)) form a 4 X approximate repeats region. Positions 193–301 (EDWDLLPAKK…PEYTPDDELY (109 aa)) are P-domain. The segment covering 202–212 (KIKDPDAKKPE) has biased composition (basic and acidic residues). The tract at residues 202–250 (KIKDPDAKKPEDWDEREYIDDAEDVKPEDWEKPEHIPDPDAKKPEDWDD) is disordered. Residues 213 to 224 (DWDEREYIDDAE) are compositionally biased toward acidic residues. The segment covering 225–246 (DVKPEDWEKPEHIPDPDAKKPE) has biased composition (basic and acidic residues). The interval 254 to 292 (GEWEPPMIDNPEYKGEWKPKQIKNPAYKGKWIHPEIENP) is 3 X approximate repeats. The segment at 302-396 (LYENWGAIGF…KEEEEGHDEL (95 aa)) is C-domain. Position 312 (Asp-312) interacts with an alpha-D-glucoside. Residues 342–380 (FDKLKTVEKEKKEKADEEARKVEEEARKKAEEEKEAKKD) show a composition bias toward basic and acidic residues. Positions 342 to 396 (FDKLKTVEKEKKEKADEEARKVEEEARKKAEEEKEAKKDDDEEEEKEEEEGHDEL) are disordered. Positions 381–396 (DDEEEEKEEEEGHDEL) are enriched in acidic residues. A Prevents secretion from ER motif is present at residues 393–396 (HDEL).

This sequence belongs to the calreticulin family.

It localises to the endoplasmic reticulum lumen. Its function is as follows. Molecular calcium-binding chaperone promoting folding, oligomeric assembly and quality control in the ER via the calreticulin/calnexin cycle. This lectin may interact transiently with almost all of the monoglucosylated glycoproteins that are synthesized in the ER. Probably by controlling the folding of extracellular matrix protein unc-52/Perlecan, may play a role in the formation of fibrous organelles, a hemidesmosome-like structure attaching muscles to the epidermis. Protects dopaminergic neurons against oxidative stress-induced neurodegeneration. The polypeptide is Calreticulin (crt-1) (Caenorhabditis briggsae).